Here is a 752-residue protein sequence, read N- to C-terminus: ATP-dependent RNA helicase DRS1 (752 aa).

Disordered stretches follow at residues 1–61 and 119–223; these read MVVG…NLDE and GLVK…TEGD. Residues 19-34 show a composition bias toward acidic residues; it reads DSEDDVPILDSSDDEK. The span at 40 to 51 shows a compositional bias: basic residues; that stretch reads TTKKRKGKNNKK. Residues 124 to 142 are compositionally biased toward basic and acidic residues; sequence AHIDSKQEEETEKEKVEKE. Acidic residues-rich tracts occupy residues 167 to 191 and 200 to 209; these read NQSE…QEEM and DEIDEEDDSE. The residue at position 208 (serine 208) is a Phosphoserine. The Q motif motif lies at 231 to 259; sequence ENFNSLSLSRPVLKGLASLGYVKPSPIQS. Residues 262-437 enclose the Helicase ATP-binding domain; sequence IPIALLGKDI…SLSLKKPVRI (176 aa). 275-282 serves as a coordination point for ATP; sequence AVTGSGKT. The DEAD box motif lies at 385-388; it reads DEAD. The Helicase C-terminal domain occupies 448–639; the sequence is KLTQEFVRIR…SMNDTIEDIL (192 aa). Residues 621-667 are a coiled coil; it reads IEETNKLVESMNDTIEDILVEEKEEKEILRAEMQLRKGENMLKHKKE. Residues 673 to 752 form a disordered region; sequence RRTWFQSESD…NKKKGFKSRR (80 aa). Residues 694–705 show a composition bias toward basic residues; the sequence is RNKKVTNSKKRK. The span at 722-734 shows a compositional bias: basic and acidic residues; the sequence is TKTDRIADQERTF. Residues 735-752 show a composition bias toward basic residues; the sequence is KKQKSTNSNKKKGFKSRR.

The protein belongs to the DEAD box helicase family. DDX27/DRS1 subfamily. In terms of assembly, interacts with RRP1 and associates with pre-ribosomal particles.

The protein resides in the nucleus. It localises to the nucleolus. It carries out the reaction ATP + H2O = ADP + phosphate + H(+). Functionally, ATP-binding RNA helicase involved in ribosome assembly. The sequence is that of ATP-dependent RNA helicase DRS1 (DRS1) from Saccharomyces cerevisiae (strain ATCC 204508 / S288c) (Baker's yeast).